The chain runs to 101 residues: MKVTDVRLRKIQTDGRMKALVSITLDESFVVHDLRVIEGNTGLFVAMPSKRTPDGEFRDIAHPINSEMRQEIQDAVMKVYEETDEVIPDRNAQSSDDSEEA.

The protein belongs to the SpoVG family.

Functionally, could be involved in septation. The polypeptide is Putative septation protein SpoVG (Staphylococcus saprophyticus subsp. saprophyticus (strain ATCC 15305 / DSM 20229 / NCIMB 8711 / NCTC 7292 / S-41)).